The primary structure comprises 372 residues: tRNA pseudouridine synthase D (372 aa).

Residue aspartate 85 is the Nucleophile of the active site. The TRUD domain maps to 160–330 (GFTNYFGYQR…MQGSRRFMWG (171 aa)).

The protein belongs to the pseudouridine synthase TruD family.

It carries out the reaction uridine(13) in tRNA = pseudouridine(13) in tRNA. Functionally, responsible for synthesis of pseudouridine from uracil-13 in transfer RNAs. The polypeptide is tRNA pseudouridine synthase D (Campylobacter jejuni (strain RM1221)).